The sequence spans 1196 residues: DNA polymerase beta (1196 aa).

The protein belongs to the DNA polymerase type-B family.

The catalysed reaction is DNA(n) + a 2'-deoxyribonucleoside 5'-triphosphate = DNA(n+1) + diphosphate. Functionally, DNA-directed DNA polymerase involved in viral DNA replication. This chain is DNA polymerase beta, found in African swine fever virus (isolate Pig/Kenya/KEN-50/1950) (ASFV).